A 175-amino-acid polypeptide reads, in one-letter code: Alpha-crystallin B chain (175 aa).

Met1 is subject to N-acetylmethionine. Residue Ser19 is modified to Phosphoserine. O-linked (GlcNAc) serine glycosylation is present at Ser41. 2 positions are modified to phosphoserine: Ser45 and Ser59. Residues 56-164 form the sHSP domain; sequence RAPSWFDTGL…PERTIPITRE (109 aa). His83 is a Zn(2+) binding site. The residue at position 92 (Lys92) is an N6-acetyllysine; partial. Zn(2+) contacts are provided by His104, Glu106, His111, and His119. Residues 146-175 are disordered; the sequence is NGPRKQVSGPERTIPITREEKPAVTAAPKK. Position 166 is an N6-acetyllysine (Lys166). An O-linked (GlcNAc) threonine glycan is attached at Thr170.

It belongs to the small heat shock protein (HSP20) family. Heteromer composed of three CRYAA and one CRYAB subunits. Aggregates with homologous proteins, including the small heat shock protein HSPB1, to form large heteromeric complexes. Inter-subunit bridging via zinc ions enhances stability, which is crucial as there is no protein turn over in the lens. Interacts with HSPBAP1 and TTN/titin. Interacts with TMEM109; in the cellular response to DNA damage. Interacts with DES; binds rapidly during early stages of DES filament assembly and a reduced binding seen in the later stages. Interacts with TMED10; the interaction mediates the translocation from the cytoplasm into the ERGIC (endoplasmic reticulum-Golgi intermediate compartment) and thereby secretion. Interacts with ATP6V1A and with MTOR, forming a ternary complex. As to expression, lens as well as other tissues. Expressed in myocardial tissue.

It is found in the cytoplasm. Its subcellular location is the nucleus. It localises to the secreted. The protein localises to the lysosome. In terms of biological role, may contribute to the transparency and refractive index of the lens. Has chaperone-like activity, preventing aggregation of various proteins under a wide range of stress conditions. In lens epithelial cells, stabilizes the ATP6V1A protein, preventing its degradation by the proteasome. This is Alpha-crystallin B chain from Homo sapiens (Human).